The following is a 399-amino-acid chain: Phosphoglycerate kinase (399 aa).

Substrate contacts are provided by residues 22–24, Arg37, 60–63, Arg118, and Arg151; these read DFN and HFGR. ATP-binding positions include Lys201, Glu322, and 352–355; that span reads GGDS.

It belongs to the phosphoglycerate kinase family. In terms of assembly, monomer.

The protein localises to the cytoplasm. The catalysed reaction is (2R)-3-phosphoglycerate + ATP = (2R)-3-phospho-glyceroyl phosphate + ADP. Its pathway is carbohydrate degradation; glycolysis; pyruvate from D-glyceraldehyde 3-phosphate: step 2/5. This Wolbachia sp. subsp. Brugia malayi (strain TRS) protein is Phosphoglycerate kinase.